The sequence spans 324 residues: MSASSQSRPTTIACLLGPTASGKTAAALALAARRPIEIVSVDSALVYRDMDIGTAKPSREERASVPHHLIDIIDPADAYSAAEFRADTLRLIGEIVARGRTPLLAGGTMLYYKALTQGLNDLPGADPEVRAALDADAARDGWPALHARLAQVDPDTAARLAPNDSQRIQRALEIFMLSGQPMSALLAAPRRTDDAAAAYRFVPVALEPSDRAVLHTRIAQRFDAMLDAGFIDEVERLRRRDDLHPDLPSMRCVGYRQAWEYLDGDTDYRTMRDKGIFATRQLCKRQITWLRAMPERIVVDCIAPDATARALDALERVLDGRTPD.

17–24 contributes to the ATP binding site; the sequence is GPTASGKT. Substrate is bound at residue 19–24; that stretch reads TASGKT. Interaction with substrate tRNA regions lie at residues 42–45, 166–170, 251–256, and 284–291; these read DSAL, QRIQR, RCVGYR, and KRQITWLR.

It belongs to the IPP transferase family. In terms of assembly, monomer. Requires Mg(2+) as cofactor.

The enzyme catalyses adenosine(37) in tRNA + dimethylallyl diphosphate = N(6)-dimethylallyladenosine(37) in tRNA + diphosphate. Catalyzes the transfer of a dimethylallyl group onto the adenine at position 37 in tRNAs that read codons beginning with uridine, leading to the formation of N6-(dimethylallyl)adenosine (i(6)A). The sequence is that of tRNA dimethylallyltransferase from Burkholderia orbicola (strain AU 1054).